Here is a 213-residue protein sequence, read N- to C-terminus: ATP phosphoribosyltransferase (213 aa).

The protein belongs to the ATP phosphoribosyltransferase family. Short subfamily. In terms of assembly, heteromultimer composed of HisG and HisZ subunits.

It localises to the cytoplasm. The catalysed reaction is 1-(5-phospho-beta-D-ribosyl)-ATP + diphosphate = 5-phospho-alpha-D-ribose 1-diphosphate + ATP. The protein operates within amino-acid biosynthesis; L-histidine biosynthesis; L-histidine from 5-phospho-alpha-D-ribose 1-diphosphate: step 1/9. Functionally, catalyzes the condensation of ATP and 5-phosphoribose 1-diphosphate to form N'-(5'-phosphoribosyl)-ATP (PR-ATP). Has a crucial role in the pathway because the rate of histidine biosynthesis seems to be controlled primarily by regulation of HisG enzymatic activity. This Bacillus velezensis (strain DSM 23117 / BGSC 10A6 / LMG 26770 / FZB42) (Bacillus amyloliquefaciens subsp. plantarum) protein is ATP phosphoribosyltransferase.